A 264-amino-acid chain; its full sequence is 14-3-3-like protein GF14-A (264 aa).

Positions 245-264 (DMQDDGGDEMRDATKPEDEH) are disordered. Over residues 252 to 264 (DEMRDATKPEDEH) the composition is skewed to basic and acidic residues.

This sequence belongs to the 14-3-3 family.

Functionally, is associated with a DNA binding complex that binds to the G box, a well-characterized cis-acting DNA regulatory element found in plant genes. The chain is 14-3-3-like protein GF14-A (GF14A) from Oryza sativa subsp. japonica (Rice).